Here is an 833-residue protein sequence, read N- to C-terminus: DNA ligase (833 aa).

Residues 35–39 (DADYD), 84–85 (SL), and glutamate 115 each bind NAD(+). Residue lysine 117 is the N6-AMP-lysine intermediate of the active site. 4 residues coordinate NAD(+): arginine 138, glutamate 175, lysine 292, and lysine 316. The Zn(2+) site is built by cysteine 410, cysteine 413, cysteine 428, and cysteine 434. Residues 750-833 (EKTGPLDGQT…AFLGDHGQQP (84 aa)) enclose the BRCT domain.

The protein belongs to the NAD-dependent DNA ligase family. LigA subfamily. It depends on Mg(2+) as a cofactor. Mn(2+) is required as a cofactor.

The catalysed reaction is NAD(+) + (deoxyribonucleotide)n-3'-hydroxyl + 5'-phospho-(deoxyribonucleotide)m = (deoxyribonucleotide)n+m + AMP + beta-nicotinamide D-nucleotide.. DNA ligase that catalyzes the formation of phosphodiester linkages between 5'-phosphoryl and 3'-hydroxyl groups in double-stranded DNA using NAD as a coenzyme and as the energy source for the reaction. It is essential for DNA replication and repair of damaged DNA. The polypeptide is DNA ligase (Xanthomonas axonopodis pv. citri (strain 306)).